Consider the following 122-residue polypeptide: MIQQESRLKVADNTGAKEILCIRVLGGSSRRYAGIGDIIVATVKDAIPGGNVKRGDVVKAVVVRTVKERRRPDGSYIKFDENAAVIIKPDNDPRGTRIFGPVGRELREKRFMKLISLAPEVL.

Belongs to the universal ribosomal protein uL14 family. As to quaternary structure, part of the 50S ribosomal subunit. Forms a cluster with proteins L3 and L19. In the 70S ribosome, L14 and L19 interact and together make contacts with the 16S rRNA in bridges B5 and B8.

In terms of biological role, binds to 23S rRNA. Forms part of two intersubunit bridges in the 70S ribosome. In Mycobacterium ulcerans (strain Agy99), this protein is Large ribosomal subunit protein uL14.